The chain runs to 367 residues: Transcription factor aptf-2 (367 aa).

The tract at residues 29 to 49 (VPATKETGPSSSAECSTQPAV) is disordered. Over residues 36-47 (GPSSSAECSTQP) the composition is skewed to polar residues. The tract at residues 220 to 354 (AKQKAFPNKV…GVASELRRLT (135 aa)) is H-S-H (helix-span-helix), dimerization.

Belongs to the AP-2 family. As to quaternary structure, binds DNA as a dimer.

It localises to the nucleus. Its subcellular location is the cytoplasm. Its function is as follows. Sequence-specific DNA-binding protein that interacts with enhancer elements to regulate transcription of selected genes. Required for neuroblast and epidermal morphogenesis, perhaps acting in cooperation with transcription factor aptf-4. This chain is Transcription factor aptf-2, found in Caenorhabditis elegans.